Consider the following 189-residue polypeptide: MSNIDLLKIEEAVKMILEAVGEDVNREGLLDTPKRVAKMYAEMFSGLHEDAKDYFRTVFHEDHEELVLVKDIPFYSMCEHHLVPFYGKAHVAYIPNDGIVAGLSKLGRAVETIARRPQLQERITSSVADTIMEMLAPKGVYVVIEAEHMCMTMRGLKKPGSKTVTSVARGVYEEDEVKRREVLSFIQMS.

Cysteine 78, histidine 81, and cysteine 150 together coordinate Zn(2+).

This sequence belongs to the GTP cyclohydrolase I family. Homomer.

The catalysed reaction is GTP + H2O = 7,8-dihydroneopterin 3'-triphosphate + formate + H(+). It functions in the pathway cofactor biosynthesis; 7,8-dihydroneopterin triphosphate biosynthesis; 7,8-dihydroneopterin triphosphate from GTP: step 1/1. The polypeptide is GTP cyclohydrolase 1 (Lysinibacillus sphaericus (strain C3-41)).